The primary structure comprises 348 residues: Anthranilate phosphoribosyltransferase (348 aa).

5-phospho-alpha-D-ribose 1-diphosphate is bound by residues Gly91, 94–95 (GD), Thr99, 101–104 (NIST), 119–127 (KHGNRSASG), and Ser131. Residue Gly91 participates in anthranilate binding. Position 103 (Ser103) interacts with Mg(2+). Asn122 contributes to the anthranilate binding site. Arg177 provides a ligand contact to anthranilate. Mg(2+) is bound by residues Asp236 and Glu237.

This sequence belongs to the anthranilate phosphoribosyltransferase family. As to quaternary structure, homodimer. Requires Mg(2+) as cofactor.

It catalyses the reaction N-(5-phospho-beta-D-ribosyl)anthranilate + diphosphate = 5-phospho-alpha-D-ribose 1-diphosphate + anthranilate. It functions in the pathway amino-acid biosynthesis; L-tryptophan biosynthesis; L-tryptophan from chorismate: step 2/5. Functionally, catalyzes the transfer of the phosphoribosyl group of 5-phosphorylribose-1-pyrophosphate (PRPP) to anthranilate to yield N-(5'-phosphoribosyl)-anthranilate (PRA). This is Anthranilate phosphoribosyltransferase from Synechococcus elongatus (strain ATCC 33912 / PCC 7942 / FACHB-805) (Anacystis nidulans R2).